The following is a 118-amino-acid chain: Large ribosomal subunit protein uL24 (118 aa).

This sequence belongs to the universal ribosomal protein uL24 family. In terms of assembly, part of the 50S ribosomal subunit.

Functionally, one of two assembly initiator proteins, it binds directly to the 5'-end of the 23S rRNA, where it nucleates assembly of the 50S subunit. Its function is as follows. One of the proteins that surrounds the polypeptide exit tunnel on the outside of the subunit. The chain is Large ribosomal subunit protein uL24 from Prochlorococcus marinus subsp. pastoris (strain CCMP1986 / NIES-2087 / MED4).